Reading from the N-terminus, the 371-residue chain is Glutamate 5-kinase (371 aa).

Position 11 (K11) interacts with ATP. Substrate is bound by residues S52, D139, and N151. ATP contacts are provided by residues 171–172 (TD) and 213–219 (TGGMATK). One can recognise a PUA domain in the interval 278-356 (EGSLTLDEGA…AEIPYILGYE (79 aa)).

It belongs to the glutamate 5-kinase family.

Its subcellular location is the cytoplasm. The catalysed reaction is L-glutamate + ATP = L-glutamyl 5-phosphate + ADP. Its pathway is amino-acid biosynthesis; L-proline biosynthesis; L-glutamate 5-semialdehyde from L-glutamate: step 1/2. In terms of biological role, catalyzes the transfer of a phosphate group to glutamate to form L-glutamate 5-phosphate. This chain is Glutamate 5-kinase, found in Synechococcus sp. (strain JA-3-3Ab) (Cyanobacteria bacterium Yellowstone A-Prime).